Here is a 366-residue protein sequence, read N- to C-terminus: Chorismate synthase (366 aa).

The NADP(+) site is built by Arg-48 and Arg-54. FMN is bound by residues 125–127 (RSS), 238–239 (NA), Gly-278, 293–297 (KPTSS), and Arg-319.

This sequence belongs to the chorismate synthase family. Homotetramer. The cofactor is FMNH2.

It catalyses the reaction 5-O-(1-carboxyvinyl)-3-phosphoshikimate = chorismate + phosphate. It participates in metabolic intermediate biosynthesis; chorismate biosynthesis; chorismate from D-erythrose 4-phosphate and phosphoenolpyruvate: step 7/7. Its function is as follows. Catalyzes the anti-1,4-elimination of the C-3 phosphate and the C-6 proR hydrogen from 5-enolpyruvylshikimate-3-phosphate (EPSP) to yield chorismate, which is the branch point compound that serves as the starting substrate for the three terminal pathways of aromatic amino acid biosynthesis. This reaction introduces a second double bond into the aromatic ring system. This Neisseria gonorrhoeae (strain ATCC 700825 / FA 1090) protein is Chorismate synthase.